An 806-amino-acid polypeptide reads, in one-letter code: Putative phage-related protein YobO (806 aa).

A disordered region spans residues 1–23 (MVHFKNCPDPSLNANSQSHPEFS). Positions 12 to 21 (LNANSQSHPE) are enriched in polar residues. PbH1 repeat units follow at residues 199 to 221 (VEYG…DITS), 237 to 259 (SRYI…TTHY), 260 to 292 (SEYI…EIDD), 294 to 315 (SRHV…EVKA), 419 to 441 (SQNI…DINL), and 448 to 470 (TDYI…SIGG).

This Bacillus subtilis (strain 168) protein is Putative phage-related protein YobO (yobO).